We begin with the raw amino-acid sequence, 430 residues long: Trigger factor (430 aa).

The PPIase FKBP-type domain maps to 163–248; the sequence is GDVVDVDYKG…LNSIKTSILP (86 aa).

Belongs to the FKBP-type PPIase family. Tig subfamily.

It is found in the cytoplasm. The catalysed reaction is [protein]-peptidylproline (omega=180) = [protein]-peptidylproline (omega=0). Involved in protein export. Acts as a chaperone by maintaining the newly synthesized protein in an open conformation. Functions as a peptidyl-prolyl cis-trans isomerase. This chain is Trigger factor, found in Lawsonia intracellularis (strain PHE/MN1-00).